The chain runs to 277 residues: PTS system sorbose-specific EIIC component (277 aa).

Transmembrane regions (helical) follow at residues 1 to 21, 92 to 112, 133 to 153, 177 to 197, and 219 to 239; these read MAIS…VGMG, IQKG…LTVL, FTAI…RVSI, VITG…YAMI, and YLKL…IVYV. In terms of domain architecture, PTS EIIC type-4 spans 3-237; it reads ISTIQIILIF…GAVGLIFAIV (235 aa).

Its subcellular location is the cell membrane. The phosphoenolpyruvate-dependent sugar phosphotransferase system (PTS), a major carbohydrate active transport system, catalyzes the phosphorylation of incoming sugar substrates concomitant with their translocation across the cell membrane. The enzyme II SorABCD PTS system is involved in L-sorbose transport. This Lacticaseibacillus casei (Lactobacillus casei) protein is PTS system sorbose-specific EIIC component.